The chain runs to 337 residues: MGKIKIGINGFGRIGRLVARVALQSEDVELVAVNDPFITTDYMTYMFKYDTVHGQWKHSDIKIKDSKTLLLGEKPVTVFGIRNPDEIPWAEAGAEYVVESTGVFTDKEKAAAHLKGGAKKVVISAPSKDAPMFVCGVNEDKYTSDIDIVSNASCTTNCLAPLAKVIHDNFGIIEGLMTTVHAITATQKTVDGPSSKDWRGGRAASFNIIPSSTGAAKAVGKVLPDLNGKLTGMSFRVPTVDVSVVDLTVRIEKAASYDAIKSAIKSASEGKLKGIIGYVEEDLVSTDFVGDSRSSIFDAKAGIALNDNFVKLVAWYDNEWGYSNRVIDLIRHMAKTQ.

NAD(+) contacts are provided by residues 13–14, aspartate 35, and arginine 82; that span reads RI. Residues 153-155, threonine 184, 213-214, and arginine 236 contribute to the D-glyceraldehyde 3-phosphate site; these read SCT and TG. Cysteine 154 (nucleophile) is an active-site residue. Residue asparagine 318 participates in NAD(+) binding.

This sequence belongs to the glyceraldehyde-3-phosphate dehydrogenase family. As to quaternary structure, homotetramer. In terms of processing, phosphorylated after gibberellin treatment.

The protein resides in the cytoplasm. The enzyme catalyses D-glyceraldehyde 3-phosphate + phosphate + NAD(+) = (2R)-3-phospho-glyceroyl phosphate + NADH + H(+). It participates in carbohydrate degradation; glycolysis; pyruvate from D-glyceraldehyde 3-phosphate: step 1/5. In terms of biological role, key enzyme in glycolysis that catalyzes the first step of the pathway by converting D-glyceraldehyde 3-phosphate (G3P) into 3-phospho-D-glyceroyl phosphate. Essential for the maintenance of cellular ATP levels and carbohydrate metabolism. The polypeptide is Glyceraldehyde-3-phosphate dehydrogenase 1, cytosolic (GAPC1) (Oryza sativa subsp. japonica (Rice)).